The chain runs to 256 residues: Lysosomal membrane ascorbate-dependent ferrireductase CYB561A3 (256 aa).

The Cytoplasmic portion of the chain corresponds to 1–3 (MAS). A helical membrane pass occupies residues 4-24 (GWFYMSCMVLGSLGSMCILFT). The 208-residue stretch at 12 to 219 (VLGSLGSMCI…FGLLVLYILL (208 aa)) folds into the Cytochrome b561 domain. Over 25–40 (TYWMQYWRGGFAWDGT) the chain is Lumenal. A helical transmembrane segment spans residues 41–61 (VLMFNWHPVLMVSGMVVLYGA). His-47 and Arg-67 together coordinate heme b. Over 62–83 (ASLVYRLPASWVGPKLPWKVLH) the chain is Cytoplasmic. L-ascorbate contacts are provided by Lys-76 and Lys-80. His-83 serves as a coordination point for heme b. A helical transmembrane segment spans residues 84-104 (AALHLLAFTVTVVGLTAVFGF). The Lumenal portion of the chain corresponds to 105–119 (HNHSKITHLYSLHSW). A glycan (N-linked (GlcNAc...) asparagine) is linked at Asn-106. Heme b-binding positions include 112-115 (HLYS) and His-117. A helical membrane pass occupies residues 120 to 140 (LGITTVALFACQWFLGFAVFL). Residues 141-154 (LPWASQWLRSLLKP) are Cytoplasmic-facing. Arg-149 provides a ligand contact to L-ascorbate. Residues 155–175 (VHVFFGACILSLSIASVISGI) traverse the membrane as a helical segment. 2 residues coordinate heme b: His-156 and Glu-177. At 176-202 (NEKLFFVLKNATRPYSSLPGEAVFANS) the chain is on the lumenal side. The chain crosses the membrane as a helical span at residues 203 to 223 (TGILVVSFGLLVLYILLASSW). Heme b is bound at residue Arg-224. The Cytoplasmic portion of the chain corresponds to 224–256 (RRPDPGALTDRQVWLLVSHYRWDKAKKACFAPC).

Homodimer. It depends on heme b as a cofactor. Post-translationally, N-glycosylated.

The protein resides in the late endosome membrane. Its subcellular location is the lysosome membrane. The catalysed reaction is Fe(3+)(out) + L-ascorbate(in) = monodehydro-L-ascorbate radical(in) + Fe(2+)(out) + H(+). Functionally, transmembrane reductase that uses ascorbate as an electron donor in the cytoplasm and transfers electrons across membranes to reduce iron cations Fe(3+) into Fe(2+) in the lumen of the late endosome and lysosome. Reduced iron can then be extruded from the late endosome and lysosome to the cytoplasm by divalent metal-specific transporters. It is therefore most probably involved in endosomal and lysosomal cellular iron homeostasis. In Rattus norvegicus (Rat), this protein is Lysosomal membrane ascorbate-dependent ferrireductase CYB561A3.